The following is a 78-amino-acid chain: Major outer membrane lipoprotein Lpp (78 aa).

The signal sequence occupies residues 1–20 (MNRTKLVLGAVILGSTLLAG). The N-palmitoyl cysteine moiety is linked to residue Cys21. A lipid anchor (S-diacylglycerol cysteine) is attached at Cys21. Repeats lie at residues 24 to 34 (NAKIDQLSSDV) and 38 to 48 (NAKVDQLSNDV). A coiled-coil region spans residues 27–75 (IDQLSSDVQTLNAKVDQLSNDVNAIRSDVQAAKDDAARANQRLDNQVRT). An N6-murein peptidoglycan lysine modification is found at Lys78.

The protein belongs to the Lpp family. Homotrimer.

Its subcellular location is the cell outer membrane. It is found in the secreted. It localises to the cell wall. Its function is as follows. A highly abundant outer membrane lipoprotein that controls the distance between the inner and outer membranes. The only protein known to be covalently linked to the peptidoglycan network (PGN). Also non-covalently binds the PGN. The link between the cell outer membrane and PGN contributes to maintenance of the structural and functional integrity of the cell envelope, and maintains the correct distance between the PGN and the outer membrane. This chain is Major outer membrane lipoprotein Lpp, found in Pectobacterium atrosepticum (strain SCRI 1043 / ATCC BAA-672) (Erwinia carotovora subsp. atroseptica).